The following is a 94-amino-acid chain: Small ribosomal subunit protein uS19 (94 aa).

This sequence belongs to the universal ribosomal protein uS19 family.

Functionally, protein S19 forms a complex with S13 that binds strongly to the 16S ribosomal RNA. In Carboxydothermus hydrogenoformans (strain ATCC BAA-161 / DSM 6008 / Z-2901), this protein is Small ribosomal subunit protein uS19.